Consider the following 989-residue polypeptide: Cellulose synthase A catalytic subunit 4 [UDP-forming] (989 aa).

The Cytoplasmic segment spans residues 1–184 (MMESGVPPCA…SRIIPISKNK (184 aa)). Zn(2+)-binding residues include C9, C12, C20, C23, C28, C31, C43, and C46. The RING-type; degenerate zinc finger occupies 9-47 (CAACGDDAHAACRACSYALCKACLDEDAAEGRTTCARCG). Over residues 138–149 (KKEKKASAKKAA) the composition is skewed to basic residues. The tract at residues 138–158 (KKEKKASAKKAAAKAQAPPVE) is disordered. The chain crosses the membrane as a helical span at residues 185–205 (LTPYRAVIIMRLVVLGLFFHY). Residues 206 to 213 (RITNPVYS) are Extracellular-facing. A helical transmembrane segment spans residues 214 to 234 (AFGLWMTSVICEIWFGFSWIL). Residues 235 to 772 (DQFPKWCPIN…INTIVYPFTS (538 aa)) lie on the Cytoplasmic side of the membrane. S272, K278, E279, and D308 together coordinate UDP-alpha-D-glucose. The active site involves D308. The stretch at 362-389 (VKERRAMKRDYEEYKVRINALVAKAQKT) forms a coiled coil. Residue K449 coordinates UDP-alpha-D-glucose. 2 residues coordinate Mn(2+): K450 and D474. D688 is an active-site residue. The chain crosses the membrane as a helical span at residues 773–793 (LPLIAYCCLPAICLLTGKFII). The Extracellular segment spans residues 794–798 (PTLSN). A helical membrane pass occupies residues 799 to 819 (AATIWFLGLFISIIVTSVLEL). At 820–835 (RWSGIGIEDWWRNEQF) the chain is on the cytoplasmic side. Residues 836-856 (WVIGGVSAHLFAVFQGILKMI) form a helical membrane-spanning segment. The Extracellular portion of the chain corresponds to 857–884 (AGLDTNFTVTAKATDDTEFGELYVFKWT). N-linked (GlcNAc...) asparagine glycosylation occurs at N862. Residues 885–905 (TVLIPPTSILVLNLVGVVAGF) traverse the membrane as a helical segment. Over 906–916 (SDALNSGYESW) the chain is Cytoplasmic. A helical transmembrane segment spans residues 917-937 (GPLFGKVFFAMWVIMHLYPFL). The Extracellular portion of the chain corresponds to 938-946 (KGLMGRQNR). The helical transmembrane segment at 947–967 (TPTIVVLWSVLLASVFSLLWV) threads the bilayer. The Cytoplasmic portion of the chain corresponds to 968 to 989 (KIDPFIGSSETTTTNSCANFDC).

This sequence belongs to the glycosyltransferase 2 family. Plant cellulose synthase subfamily. It depends on Mn(2+) as a cofactor. The cofactor is Zn(2+).

The protein resides in the cell membrane. The catalysed reaction is [(1-&gt;4)-beta-D-glucosyl](n) + UDP-alpha-D-glucose = [(1-&gt;4)-beta-D-glucosyl](n+1) + UDP + H(+). Its pathway is glycan metabolism; plant cellulose biosynthesis. In terms of biological role, catalytic subunit of cellulose synthase terminal complexes ('rosettes'), required for beta-1,4-glucan microfibril crystallization, a major mechanism of the cell wall formation. Involved in the secondary cell wall formation. This is Cellulose synthase A catalytic subunit 4 [UDP-forming] (CESA4) from Oryza sativa subsp. indica (Rice).